The primary structure comprises 331 residues: Nacrein-like protein P1 (331 aa).

Residues 1-331 enclose the Alpha-carbonic anhydrase domain; sequence QSPINIVSYD…LHALRNVEGY (331 aa). Zn(2+) contacts are provided by H69, H71, and H94. The disordered stretch occupies residues 138 to 240; sequence DEPDDEECKR…GENGHKHGCR (103 aa). Over residues 144–156 the composition is skewed to basic and acidic residues; sequence ECKRILKGHHPDN. Positions 157-232 are enriched in low complexity; it reads NENGNGDNGN…NNGENGNNGE (76 aa). A run of 24 repeats spans residues 162–164, 165–167, 168–170, 171–173, 174–176, 177–179, 180–182, 183–185, 186–188, 189–191, 192–194, 195–197, 198–200, 201–203, 204–206, 207–209, 210–212, 213–215, 216–218, 219–221, 222–224, 225–227, 228–229, and 231–233. Residues 162–233 form a 24 X 3 AA approximate tandem repeats of G-X-N region; the sequence is GDNGNNGYNG…NGENGNNGEN (72 aa). A substrate-binding site is contributed by 298–299; sequence TT.

This sequence belongs to the alpha-carbonic anhydrase family. Homooligomer; disulfide-linked. May also be disulfide-linked to insoluble organic matrix. Requires Zn(2+) as cofactor. Expressed in the mantle.

It localises to the secreted. It is found in the extracellular space. Its subcellular location is the extracellular matrix. The enzyme catalyses hydrogencarbonate + H(+) = CO2 + H2O. Acts as a negative regulator for calcification in the shells of mollusks. May function both as a calcium concentrator and as a carbonic anhydrase required for production of carbonate ions, which are assembled to CaCO(3) at mineralization sites. Is important for shell formation in both the calcitic prismatic layer and the aragonitic nacreous layer. Shows inhibitory activity of crystal formation when present in free state but, when attached to the insoluble matrix, may regulate the form and size of aragonite crystal. The polypeptide is Nacrein-like protein P1 (Mizuhopecten yessoensis (Japanese scallop)).